A 320-amino-acid polypeptide reads, in one-letter code: Ferrochelatase (320 aa).

Fe cation contacts are provided by His194 and Glu275.

Belongs to the ferrochelatase family. As to quaternary structure, monomer.

The protein resides in the cytoplasm. It catalyses the reaction heme b + 2 H(+) = protoporphyrin IX + Fe(2+). The protein operates within porphyrin-containing compound metabolism; protoheme biosynthesis; protoheme from protoporphyrin-IX: step 1/1. Its function is as follows. Catalyzes the ferrous insertion into protoporphyrin IX. This Escherichia coli O9:H4 (strain HS) protein is Ferrochelatase.